The following is an 86-amino-acid chain: Putative antitoxin VapB36 (86 aa).

Functionally, possibly the antitoxin component of a type II toxin-antitoxin (TA) system. Its cognate toxin is VapC36 (Potential). This is Putative antitoxin VapB36 (vapB36) from Mycobacterium tuberculosis (strain CDC 1551 / Oshkosh).